We begin with the raw amino-acid sequence, 506 residues long: NAD(P)H-quinone oxidoreductase subunit 2 (506 aa).

A run of 13 helical transmembrane segments spans residues 14-34, 42-62, 79-99, 108-128, 132-152, 167-187, 206-226, 240-260, 276-296, 302-322, 330-350, 374-394, and 409-429; these read AIIP…VDLA, WAPS…TLQW, LAIA…LISW, PIGE…LLCG, LISV…LSGY, LLVG…LYGL, FITS…IAAV, PTPV…AFAI, LLFT…ALAQ, MLAY…VSGT, VLYL…VILF, LGLS…GFFG, and LLVI…ISVI.

It belongs to the complex I subunit 2 family. As to quaternary structure, NDH-1 can be composed of about 15 different subunits; different subcomplexes with different compositions have been identified which probably have different functions.

It localises to the cellular thylakoid membrane. The catalysed reaction is a plastoquinone + NADH + (n+1) H(+)(in) = a plastoquinol + NAD(+) + n H(+)(out). The enzyme catalyses a plastoquinone + NADPH + (n+1) H(+)(in) = a plastoquinol + NADP(+) + n H(+)(out). Functionally, NDH-1 shuttles electrons from an unknown electron donor, via FMN and iron-sulfur (Fe-S) centers, to quinones in the respiratory and/or the photosynthetic chain. The immediate electron acceptor for the enzyme in this species is believed to be plastoquinone. Couples the redox reaction to proton translocation, and thus conserves the redox energy in a proton gradient. Cyanobacterial NDH-1 also plays a role in inorganic carbon-concentration. The protein is NAD(P)H-quinone oxidoreductase subunit 2 of Prochlorococcus marinus (strain MIT 9301).